Here is a 344-residue protein sequence, read N- to C-terminus: Dihydroorotate dehydrogenase (quinone) (344 aa).

FMN-binding positions include 65 to 69 (AGLDK) and Thr89. Lys69 contacts substrate. Substrate is bound at residue 114-118 (NRMGF). Residues Asn145 and Asn178 each contribute to the FMN site. Asn178 contributes to the substrate binding site. Ser181 (nucleophile) is an active-site residue. Asn183 contributes to the substrate binding site. Residues Lys223 and Thr251 each contribute to the FMN site. Residue 252-253 (NT) participates in substrate binding. FMN contacts are provided by residues Gly274, Gly303, and 324–325 (YS).

This sequence belongs to the dihydroorotate dehydrogenase family. Type 2 subfamily. Monomer. FMN is required as a cofactor.

Its subcellular location is the cell membrane. It catalyses the reaction (S)-dihydroorotate + a quinone = orotate + a quinol. It participates in pyrimidine metabolism; UMP biosynthesis via de novo pathway; orotate from (S)-dihydroorotate (quinone route): step 1/1. Catalyzes the conversion of dihydroorotate to orotate with quinone as electron acceptor. This is Dihydroorotate dehydrogenase (quinone) from Cupriavidus taiwanensis (strain DSM 17343 / BCRC 17206 / CCUG 44338 / CIP 107171 / LMG 19424 / R1) (Ralstonia taiwanensis (strain LMG 19424)).